The chain runs to 352 residues: Protein-glutamate methylesterase/protein-glutamine glutaminase (352 aa).

Residues 5 to 123 (RILIVDDSVI…SKEKAIEYIR (119 aa)) enclose the Response regulatory domain. Asp-56 is modified (4-aspartylphosphate). The CheB-type methylesterase domain occupies 166-352 (EIVAIGVSTG…LAEEIIRRIG (187 aa)). Catalysis depends on residues Ser-173, His-200, and Asp-296.

Belongs to the CheB family. In terms of processing, phosphorylated by CheA. Phosphorylation of the N-terminal regulatory domain activates the methylesterase activity.

The protein localises to the cytoplasm. It catalyses the reaction [protein]-L-glutamate 5-O-methyl ester + H2O = L-glutamyl-[protein] + methanol + H(+). It carries out the reaction L-glutaminyl-[protein] + H2O = L-glutamyl-[protein] + NH4(+). Involved in chemotaxis. Part of a chemotaxis signal transduction system that modulates chemotaxis in response to various stimuli. Catalyzes the demethylation of specific methylglutamate residues introduced into the chemoreceptors (methyl-accepting chemotaxis proteins or MCP) by CheR. Also mediates the irreversible deamidation of specific glutamine residues to glutamic acid. This is Protein-glutamate methylesterase/protein-glutamine glutaminase from Trichodesmium erythraeum (strain IMS101).